The following is an 86-amino-acid chain: Small ribosomal subunit protein uS17 (86 aa).

Belongs to the universal ribosomal protein uS17 family. Part of the 30S ribosomal subunit.

Its function is as follows. One of the primary rRNA binding proteins, it binds specifically to the 5'-end of 16S ribosomal RNA. The sequence is that of Small ribosomal subunit protein uS17 from Lactococcus lactis subsp. cremoris (strain MG1363).